A 280-amino-acid polypeptide reads, in one-letter code: 2-dehydro-3-deoxyphosphooctonate aldolase (280 aa).

The protein belongs to the KdsA family.

The protein resides in the cytoplasm. It catalyses the reaction D-arabinose 5-phosphate + phosphoenolpyruvate + H2O = 3-deoxy-alpha-D-manno-2-octulosonate-8-phosphate + phosphate. The protein operates within carbohydrate biosynthesis; 3-deoxy-D-manno-octulosonate biosynthesis; 3-deoxy-D-manno-octulosonate from D-ribulose 5-phosphate: step 2/3. Its pathway is bacterial outer membrane biogenesis; lipopolysaccharide biosynthesis. This is 2-dehydro-3-deoxyphosphooctonate aldolase from Colwellia psychrerythraea (strain 34H / ATCC BAA-681) (Vibrio psychroerythus).